The following is a 127-amino-acid chain: Major sperm protein 55/57 (127 aa).

Ala2 is subject to N-acetylalanine. The 118-residue stretch at 9–126 folds into the MSP domain; the sequence is DIQTQPGTKI…RRKNLPIEYN (118 aa).

Sperm.

It is found in the cell projection. Its subcellular location is the pseudopodium. The protein resides in the cytoplasm. The protein localises to the cytoskeleton. Its function is as follows. Central component in molecular interactions underlying sperm crawling. Forms an extensive filament system that extends from sperm villipoda, along the leading edge of the pseudopod. The protein is Major sperm protein 55/57 (msp-55) of Caenorhabditis elegans.